The sequence spans 78 residues: Defensin-like protein 149 (78 aa).

A signal peptide spans 1–25; the sequence is MMKKLIQLSFTVMIIFTILVLGVVA. Cystine bridges form between Cys36/Cys77, Cys45/Cys65, Cys50/Cys71, and Cys54/Cys73.

This sequence belongs to the DEFL family.

It localises to the secreted. In Arabidopsis thaliana (Mouse-ear cress), this protein is Defensin-like protein 149 (LCR5).